We begin with the raw amino-acid sequence, 243 residues long: R-spondin-2 (243 aa).

An N-terminal signal peptide occupies residues Met-1–Cys-21. 11 cysteine pairs are disulfide-bonded: Cys-40–Cys-46, Cys-43–Cys-52, Cys-55–Cys-74, Cys-78–Cys-93, Cys-96–Cys-104, Cys-101–Cys-110, Cys-113–Cys-124, Cys-128–Cys-141, Cys-145–Cys-187, Cys-156–Cys-163, and Cys-196–Cys-203. An FU repeat occupies Met-90 to Pro-134. Positions Gly-144 to Pro-204 constitute a TSP type-1 domain. Asn-160 carries N-linked (GlcNAc...) asparagine glycosylation. Basic residues predominate over residues Pro-204–Leu-224. Positions Pro-204 to Gln-243 are disordered.

Belongs to the R-spondin family. Binds heparin.

It localises to the secreted. Its function is as follows. Activator of the canonical Wnt signaling pathway by acting as a ligand for lgr4-6 receptors. Upon binding to lgr4-6 (lgr4, lgr5 or lgr6), lgr4-6 associate with phosphorylated lrp6 and frizzled receptors that are activated by extracellular Wnt receptors, triggering the canonical Wnt signaling pathway to increase expression of target genes. Acts both in the canonical Wnt/beta-catenin-dependent pathway and in non-canonical Wnt signaling pathway. Activates neural markers and promotes muscle formation. Overexpression blocks activin, nodal and BMP4 signaling, suggesting that it may negatively regulate the TGF-beta pathway. During embryonic development, plays a crucial role in limb specification, amplifying the Wnt signaling pathway independently of LGR4-6 receptors, possibly by acting as a direct antagonistic ligand to RNF43 and ZNRF3, hence governing the number of limbs an embryo should form. The sequence is that of R-spondin-2 (rspo2) from Xenopus laevis (African clawed frog).